The chain runs to 277 residues: SF-assemblin (277 aa).

The interval 1–20 (MATSGMVSPTSGRPFSPMRS) is disordered. The interval 1-27 (MATSGMVSPTSGRPFSPMRSSVLTTTG) is nonhelical region. Positions 28–277 (SAIKLEHVSE…KMVNMQHNSA (250 aa)) are rod. A coiled-coil region spans residues 70–90 (RLEKSMEAEVKRRAESDKQLQ).

Belongs to the SF-assemblin family. The N-terminus is blocked.

It localises to the cytoplasm. The protein localises to the cytoskeleton. In terms of biological role, major component of the striated microtubule-associated fibers (SMAFs; system-I-fibers). In Dunaliella bioculata (Green alga), this protein is SF-assemblin.